The primary structure comprises 331 residues: Adenosine deaminase (331 aa).

Zn(2+)-binding residues include His12 and His14. 3 residues coordinate substrate: His14, Asp16, and Gly170. His197 is a binding site for Zn(2+). Glu200 serves as the catalytic Proton donor. Residue Asp278 coordinates Zn(2+). Residue Asp279 participates in substrate binding.

It belongs to the metallo-dependent hydrolases superfamily. Adenosine and AMP deaminases family. Adenosine deaminase subfamily. Zn(2+) serves as cofactor.

The enzyme catalyses adenosine + H2O + H(+) = inosine + NH4(+). It carries out the reaction 2'-deoxyadenosine + H2O + H(+) = 2'-deoxyinosine + NH4(+). Its function is as follows. Catalyzes the hydrolytic deamination of adenosine and 2-deoxyadenosine. The polypeptide is Adenosine deaminase (Shewanella sp. (strain W3-18-1)).